A 467-amino-acid polypeptide reads, in one-letter code: 3-isopropylmalate dehydratase large subunit (467 aa).

C347, C407, and C410 together coordinate [4Fe-4S] cluster.

It belongs to the aconitase/IPM isomerase family. LeuC type 1 subfamily. In terms of assembly, heterodimer of LeuC and LeuD. It depends on [4Fe-4S] cluster as a cofactor.

It catalyses the reaction (2R,3S)-3-isopropylmalate = (2S)-2-isopropylmalate. It functions in the pathway amino-acid biosynthesis; L-leucine biosynthesis; L-leucine from 3-methyl-2-oxobutanoate: step 2/4. Functionally, catalyzes the isomerization between 2-isopropylmalate and 3-isopropylmalate, via the formation of 2-isopropylmaleate. The sequence is that of 3-isopropylmalate dehydratase large subunit from Picosynechococcus sp. (strain ATCC 27264 / PCC 7002 / PR-6) (Agmenellum quadruplicatum).